A 373-amino-acid chain; its full sequence is tRNA-specific 2-thiouridylase MnmA (373 aa).

ATP contacts are provided by residues 12-19 (GMSGGVDS) and methionine 38. The segment at 98 to 100 (NPD) is interaction with target base in tRNA. Residue cysteine 103 is the Nucleophile of the active site. Cysteine 103 and cysteine 200 are joined by a disulfide. An ATP-binding site is contributed by glycine 127. An interaction with tRNA region spans residues 150–152 (KDQ). Cysteine 200 acts as the Cysteine persulfide intermediate in catalysis. Residues 312–313 (RY) are interaction with tRNA.

Belongs to the MnmA/TRMU family.

It localises to the cytoplasm. It carries out the reaction S-sulfanyl-L-cysteinyl-[protein] + uridine(34) in tRNA + AH2 + ATP = 2-thiouridine(34) in tRNA + L-cysteinyl-[protein] + A + AMP + diphosphate + H(+). Its function is as follows. Catalyzes the 2-thiolation of uridine at the wobble position (U34) of tRNA, leading to the formation of s(2)U34. This Streptococcus pyogenes serotype M6 (strain ATCC BAA-946 / MGAS10394) protein is tRNA-specific 2-thiouridylase MnmA.